The following is a 253-amino-acid chain: Indole-3-glycerol phosphate synthase (253 aa).

The protein belongs to the TrpC family.

The catalysed reaction is 1-(2-carboxyphenylamino)-1-deoxy-D-ribulose 5-phosphate + H(+) = (1S,2R)-1-C-(indol-3-yl)glycerol 3-phosphate + CO2 + H2O. It participates in amino-acid biosynthesis; L-tryptophan biosynthesis; L-tryptophan from chorismate: step 4/5. This chain is Indole-3-glycerol phosphate synthase, found in Bacillus cereus (strain ZK / E33L).